The sequence spans 596 residues: 3-hydroxy-3-methylglutaryl-coenzyme A reductase 1 (596 aa).

The disordered stretch occupies residues methionine 1–serine 29. Transmembrane regions (helical) follow at residues leucine 41–valine 61 and alanine 83–valine 103. The linker stretch occupies residues glutamine 104–glutamate 183. Positions aspartate 184–lysine 596 are catalytic. Glutamate 278 (charge relay system) is an active-site residue. N-linked (GlcNAc...) asparagine glycosylation is present at asparagine 342. Catalysis depends on lysine 410, which acts as the Charge relay system. Residue asparagine 455 is glycosylated (N-linked (GlcNAc...) asparagine). Catalysis depends on aspartate 486, which acts as the Charge relay system. The active-site Proton donor is histidine 584. The N-linked (GlcNAc...) asparagine glycan is linked to asparagine 588.

This sequence belongs to the HMG-CoA reductase family. Expressed in flower primordia and anthers.

Its subcellular location is the endoplasmic reticulum membrane. The catalysed reaction is (R)-mevalonate + 2 NADP(+) + CoA = (3S)-3-hydroxy-3-methylglutaryl-CoA + 2 NADPH + 2 H(+). It functions in the pathway metabolic intermediate biosynthesis; (R)-mevalonate biosynthesis; (R)-mevalonate from acetyl-CoA: step 3/3. In terms of biological role, catalyzes the synthesis of mevalonate. The specific precursor of all isoprenoid compounds present in plants. The polypeptide is 3-hydroxy-3-methylglutaryl-coenzyme A reductase 1 (HMG1) (Solanum tuberosum (Potato)).